The sequence spans 93 residues: Small ribosomal subunit protein uS19 (93 aa).

The tract at residues 73 to 93 is disordered; the sequence is EFSPTRTYRGHNKKDKKIQKK. A compositionally biased stretch (basic residues) spans 80-93; that stretch reads YRGHNKKDKKIQKK.

Belongs to the universal ribosomal protein uS19 family.

Functionally, protein S19 forms a complex with S13 that binds strongly to the 16S ribosomal RNA. This Aster yellows phytoplasma protein is Small ribosomal subunit protein uS19 (rpsS).